Here is a 126-residue protein sequence, read N- to C-terminus: Large ribosomal subunit protein bL20 (126 aa).

The protein belongs to the bacterial ribosomal protein bL20 family.

Functionally, binds directly to 23S ribosomal RNA and is necessary for the in vitro assembly process of the 50S ribosomal subunit. It is not involved in the protein synthesizing functions of that subunit. This is Large ribosomal subunit protein bL20 from Nocardia farcinica (strain IFM 10152).